A 484-amino-acid chain; its full sequence is uncharacterized protein (484 aa).

A helical transmembrane segment spans residues 25-45 (PLSLFVVLAAVPLPIYFSGLL). Positions 384–419 (LSFEETKELWVRADLDGNGVFDYEELKKIWNMTMVN) constitute an EF-hand domain. 4 residues coordinate Ca(2+): Asp-397, Asp-399, Asn-401, and Glu-408.

It is found in the membrane. This is an uncharacterized protein from Arabidopsis thaliana (Mouse-ear cress).